We begin with the raw amino-acid sequence, 292 residues long: ATP synthase gamma chain (292 aa).

Belongs to the ATPase gamma chain family. As to quaternary structure, F-type ATPases have 2 components, CF(1) - the catalytic core - and CF(0) - the membrane proton channel. CF(1) has five subunits: alpha(3), beta(3), gamma(1), delta(1), epsilon(1). CF(0) has three main subunits: a, b and c.

The protein resides in the cell inner membrane. Produces ATP from ADP in the presence of a proton gradient across the membrane. The gamma chain is believed to be important in regulating ATPase activity and the flow of protons through the CF(0) complex. The chain is ATP synthase gamma chain from Chlorobaculum tepidum (strain ATCC 49652 / DSM 12025 / NBRC 103806 / TLS) (Chlorobium tepidum).